Here is a 257-residue protein sequence, read N- to C-terminus: UPF0246 protein Ent638_0568 (257 aa).

Belongs to the UPF0246 family.

The polypeptide is UPF0246 protein Ent638_0568 (Enterobacter sp. (strain 638)).